We begin with the raw amino-acid sequence, 159 residues long: Siroheme decarboxylase beta subunit (159 aa).

152-157 (KTSMTY) provides a ligand contact to substrate.

The protein belongs to the Ahb/Nir family. In terms of assembly, forms a heterodimer composed of AhbA and AhbB.

It catalyses the reaction siroheme + 2 H(+) = 12,18-didecarboxysiroheme + 2 CO2. The protein operates within porphyrin-containing compound metabolism; protoheme biosynthesis. Involved in siroheme-dependent heme b biosynthesis. Catalyzes the decarboxylation of siroheme into didecarboxysiroheme. Siroheme is decarboxylated to monodecarboxysiroheme, which is in turn decarboxylated to didecarboxysiroheme. This is Siroheme decarboxylase beta subunit from Desulfovibrio desulfuricans (strain ATCC 27774 / DSM 6949 / MB).